The sequence spans 139 residues: Small ribosomal subunit protein bS6 (139 aa).

It belongs to the bacterial ribosomal protein bS6 family.

Its function is as follows. Binds together with bS18 to 16S ribosomal RNA. The polypeptide is Small ribosomal subunit protein bS6 (Borreliella afzelii (strain PKo) (Borrelia afzelii)).